A 354-amino-acid chain; its full sequence is MQSPIRHDWSLEEVEALFALPFNDLLFQAQVTHRRNFDPNEVQVSTLLSIKTGACPEDCKYCPQSGHYNTGLEKEKLLEVEKVVNEAKAAKEKGASRFCMGAAWRNPRAKDMPYVLEMVKQVKSLGMETCMTLGMLTADQASELAGAGLDYYNHNLDTSENYYGEIITTRTYSDRLETLQNVRDAGMKVCCGGIMGMGESARDRAALLAQLANLPSHPESVPINMLVKVKGTPLEVQEDIDPFDFIRTIAVARILMPRSHVRLSAGREDMNEQMQAMCFLAGANSIFYGEKLLTTPNPEADKDMMLFKKLGIRPEQREQAHSEDQQEAYLHDVIQAHDQQQRMESMFYDATKTA.

The 219-residue stretch at 40-258 (NEVQVSTLLS…IAVARILMPR (219 aa)) folds into the Radical SAM core domain. 3 residues coordinate [4Fe-4S] cluster: C55, C59, and C62. Residues C99, C130, C190, and R262 each coordinate [2Fe-2S] cluster.

The protein belongs to the radical SAM superfamily. Biotin synthase family. In terms of assembly, homodimer. [4Fe-4S] cluster is required as a cofactor. The cofactor is [2Fe-2S] cluster.

It catalyses the reaction (4R,5S)-dethiobiotin + (sulfur carrier)-SH + 2 reduced [2Fe-2S]-[ferredoxin] + 2 S-adenosyl-L-methionine = (sulfur carrier)-H + biotin + 2 5'-deoxyadenosine + 2 L-methionine + 2 oxidized [2Fe-2S]-[ferredoxin]. The protein operates within cofactor biosynthesis; biotin biosynthesis; biotin from 7,8-diaminononanoate: step 2/2. Functionally, catalyzes the conversion of dethiobiotin (DTB) to biotin by the insertion of a sulfur atom into dethiobiotin via a radical-based mechanism. This Hahella chejuensis (strain KCTC 2396) protein is Biotin synthase.